Consider the following 1383-residue polypeptide: Putative autophagy-related protein 11 (1383 aa).

Coiled coils occupy residues 16-49 (DKNN…YELN) and 117-324 (NLFL…QNKE). Composition is skewed to basic and acidic residues over residues 1151 to 1224 (EEEK…EDRK) and 1233 to 1249 (HSSD…KTKE). The segment at 1151–1249 (EEEKKKNEEE…KYNKKEKTKE (99 aa)) is disordered.

This sequence belongs to the ATG11 family.

Its function is as follows. Involved in cytoplasm to vacuole transport (Cvt), pexophagy, mitophagy and nucleophagy. Works as scaffold proteins that recruit ATG proteins to the pre-autophagosome (PAS), the site of vesicle/autophagosome formation. In Plasmodium falciparum (isolate 3D7), this protein is Putative autophagy-related protein 11.